The sequence spans 739 residues: Catalase-peroxidase (739 aa).

A signal peptide spans 1-23; the sequence is MLKKIVTALGMSGMLLAANSAIA. Residues 100-221 constitute a cross-link (tryptophyl-tyrosyl-methioninium (Trp-Tyr) (with M-247)); sequence WHDAGTYRLA…YAATQMGLIY (122 aa). The Proton acceptor role is filled by H101. A cross-link (tryptophyl-tyrosyl-methioninium (Tyr-Met) (with W-100)) is located at residues 221 to 247; that stretch reads YVNPEGPDGKPDIKGAASEIRQAFRAM. H262 provides a ligand contact to heme b.

Belongs to the peroxidase family. Peroxidase/catalase subfamily. As to quaternary structure, homodimer or homotetramer. The cofactor is heme b. Post-translationally, formation of the three residue Trp-Tyr-Met cross-link is important for the catalase, but not the peroxidase activity of the enzyme.

The catalysed reaction is H2O2 + AH2 = A + 2 H2O. It carries out the reaction 2 H2O2 = O2 + 2 H2O. In terms of biological role, bifunctional enzyme with both catalase and broad-spectrum peroxidase activity. The protein is Catalase-peroxidase of Francisella philomiragia subsp. philomiragia (strain ATCC 25017 / CCUG 19701 / FSC 153 / O#319-036).